The chain runs to 153 residues: Ribosome maturation factor RimP (153 aa).

Belongs to the RimP family.

It localises to the cytoplasm. Functionally, required for maturation of 30S ribosomal subunits. The chain is Ribosome maturation factor RimP from Burkholderia mallei (strain NCTC 10229).